The sequence spans 1028 residues: Ubiquitin conjugation factor E4 A (1028 aa).

Residues 33–57 (KEQLKQQSDELPASPDDSDNSVSES) form a disordered region. The residue at position 386 (K386) is an N6-acetyllysine. The region spanning 949–1023 (DACDEFLDPI…QRWLAERKQQ (75 aa)) is the U-box domain.

This sequence belongs to the ubiquitin conjugation factor E4 family. In terms of tissue distribution, expressed in liver, heart, brain, kidney and testis.

The protein localises to the cytoplasm. The catalysed reaction is S-ubiquitinyl-[E2 ubiquitin-conjugating enzyme]-L-cysteine + [acceptor protein]-L-lysine = [E2 ubiquitin-conjugating enzyme]-L-cysteine + N(6)-ubiquitinyl-[acceptor protein]-L-lysine.. It participates in protein modification; protein ubiquitination. Functionally, ubiquitin-protein ligase that probably functions as an E3 ligase in conjunction with specific E1 and E2 ligases. May also function as an E4 ligase mediating the assembly of polyubiquitin chains on substrates ubiquitinated by another E3 ubiquitin ligase. Mediates 'Lys-48'-linked polyubiquitination of substrates. The sequence is that of Ubiquitin conjugation factor E4 A from Mus musculus (Mouse).